We begin with the raw amino-acid sequence, 430 residues long: SH3 domain-containing protein PJ696.02 (430 aa).

The disordered stretch occupies residues 237-372; sequence EPEDIWGPSS…KPKFKQDSLG (136 aa). Basic and acidic residues predominate over residues 263-277; that stretch reads RRGDSYRSNRSRAHD. The residue at position 285 (S285) is a Phosphoserine. Residues 304–313 show a composition bias toward basic and acidic residues; that stretch reads SKMDNRRSKY. Residue T316 is modified to Phosphothreonine. Phosphoserine occurs at positions 318 and 324. Y325 carries the post-translational modification Phosphotyrosine. Residues S326, S354, and S406 each carry the phosphoserine modification. Residues 333–358 show a composition bias toward low complexity; it reads VYSSDVSTESSSQFSSRSSEYSKPSR. The region spanning 371 to 430 is the SH3 domain; sequence LGPNQARAMYSFAGEQPGDLSFQKGDIIDIVERSGSHDDWWTGRIGYREGIFPANYVKLS.

It belongs to the SH3YL1 family.

This is SH3 domain-containing protein PJ696.02 from Schizosaccharomyces pombe (strain 972 / ATCC 24843) (Fission yeast).